The chain runs to 960 residues: Cyclin-dependent kinase-like 5 (960 aa).

The region spanning 13–297 (FEILGVVGEG…TEQCLNHPTF (285 aa)) is the Protein kinase domain. ATP-binding positions include 19-27 (VGEGAYGVV) and lysine 42. Aspartate 135 serves as the catalytic Proton acceptor. Disordered regions lie at residues 300–349 (QRLL…IQNL), 382–566 (KTYQ…RHSK), 646–834 (SPQP…TQSQ), and 848–960 (ASNH…ETAL). Polar residues-rich tracts occupy residues 319–336 (ESST…TALQ) and 382–402 (KTYQ…NNNI). Serine 407 bears the Phosphoserine mark. Basic and acidic residues predominate over residues 407–417 (SPKEAKSKTEF). Polar residues-rich tracts occupy residues 434-462 (LKSN…QPNE), 473-482 (IPQSSRSPSY), and 510-548 (EPST…SGRN). Serine 479 carries the phosphoserine modification. 2 stretches are compositionally biased toward basic and acidic residues: residues 549–559 (NRNEGTLDSRR) and 679–704 (QKSE…RHLY). A Phosphoserine modification is found at serine 720. The span at 728 to 748 (HENNVSTRVSSLPSESSSGTN) shows a compositional bias: polar residues. Phosphoserine is present on serine 761. The segment covering 769-778 (EQLKEKEKQG) has biased composition (basic and acidic residues). Positions 791–816 (QTVPNSDSPDLLTLQKSIHSASTPSS) are enriched in polar residues. Positions 817 to 827 (RPKEWRPEKIS) are enriched in basic and acidic residues. 3 stretches are compositionally biased toward polar residues: residues 862–872 (LTAQQTKNSFS), 880–890 (SQASGGSSNIR), and 914–928 (SSVT…SYSE).

The protein belongs to the protein kinase superfamily. CMGC Ser/Thr protein kinase family. CDC2/CDKX subfamily. As to quaternary structure, interacts with MECP2. In terms of processing, autophosphorylated. In terms of tissue distribution, expressed in brain, lung, kidney, prostate, ovary, placenta, pancreas and testis. Predominant transcript in brain.

It localises to the nucleus. Its subcellular location is the cytoplasm. It is found in the cytoskeleton. The protein resides in the cilium basal body. The protein localises to the microtubule organizing center. It localises to the centrosome. It catalyses the reaction L-seryl-[protein] + ATP = O-phospho-L-seryl-[protein] + ADP + H(+). The catalysed reaction is L-threonyl-[protein] + ATP = O-phospho-L-threonyl-[protein] + ADP + H(+). Mediates phosphorylation of MECP2. May regulate ciliogenesis. This is Cyclin-dependent kinase-like 5 from Homo sapiens (Human).